A 513-amino-acid chain; its full sequence is Calcium-dependent protein kinase 2 (513 aa).

Gly-2 is lipidated: N-myristoyl glycine. The Protein kinase domain occupies 72 to 326 (YIIDEKLGQG…IEEALNHPWI (255 aa)). ATP contacts are provided by residues 78-86 (LGQGTYGCV) and Lys-101. Asp-192 functions as the Proton acceptor in the catalytic mechanism. A J domain autoinhibitory motif motif is present at residues 345–353 (NLKNFKKEN). The j domain stretch occupies residues 345–380 (NLKNFKKENELKKIALTIIAKHLCDVEINNLRNIFI). Residues 354-363 (ELKKIALTII) carry the J domain EF-hand interaction motif motif. EF-hand domains follow at residues 370–405 (VEIN…IGYQ), 406–441 (KIPP…KQTY), 442–477 (LKKE…DDIE), and 480–513 (LIDK…SKKK). Ca(2+)-binding residues include Asp-383, Asp-385, Ser-387, Thr-389, and Glu-394. Positions 455, 457, 459, 461, 466, 493, 495, 497, 499, and 504 each coordinate Ca(2+).

Belongs to the protein kinase superfamily. Ser/Thr protein kinase family. CDPK subfamily. In terms of assembly, monomer. It depends on Mg(2+) as a cofactor. In terms of processing, myristoylated; myristoylation may target it to different subcellular compartments. Autophosphorylated in vitro.

The catalysed reaction is L-seryl-[protein] + ATP = O-phospho-L-seryl-[protein] + ADP + H(+). It carries out the reaction L-threonyl-[protein] + ATP = O-phospho-L-threonyl-[protein] + ADP + H(+). Activated by calcium. Upon calcium binding to the EF-hand domains, the C-terminus of the junction domain (J domain) undergoes a conformational change which results in the dissociation of the pseudo-substrate inhibitory motif from the catalytic domain. This, in turn, may facilitate the autophosphorylation of the activation loop at Thr-232, which leads to the kinase activation. In terms of biological role, calcium-dependent protein kinase which acts as a sensor and effector of intracellular Ca(2+) levels probably in part downstream of cGMP-activated PKG kinase. During male gametogenesis in the mosquito gut, required for male exflagellation, possibly by regulating male gamete exit from the host erythrocytes. Not required for asexual blood stage proliferation. The polypeptide is Calcium-dependent protein kinase 2 (Plasmodium falciparum (isolate K1 / Thailand)).